Here is a 380-residue protein sequence, read N- to C-terminus: Cytochrome b (380 aa).

The next 4 membrane-spanning stretches (helical) occupy residues 28–48 (IGSL…FLSL), 72–93 (WLVR…YAHI), 109–129 (WLVG…GYVL), and 174–194 (FYSF…VHLL). Positions 78 and 92 each coordinate heme b. Residues His178 and His192 each coordinate heme b. His197 lines the a ubiquinone pocket. A run of 4 helical transmembrane segments spans residues 222–243 (WKIL…CYIT), 285–305 (IGGV…PLAL), 317–337 (IGQL…WLGA), and 344–364 (YISL…LYMI).

This sequence belongs to the cytochrome b family. As to quaternary structure, the main subunits of complex b-c1 are: cytochrome b, cytochrome c1 and the Rieske protein. It depends on heme b as a cofactor.

It is found in the mitochondrion inner membrane. Component of the ubiquinol-cytochrome c reductase complex (complex III or cytochrome b-c1 complex) that is part of the mitochondrial respiratory chain. The b-c1 complex mediates electron transfer from ubiquinol to cytochrome c. Contributes to the generation of a proton gradient across the mitochondrial membrane that is then used for ATP synthesis. The sequence is that of Cytochrome b (MT-CYB) from Cepaea nemoralis (Banded wood snail).